We begin with the raw amino-acid sequence, 330 residues long: tRNA U34 carboxymethyltransferase (330 aa).

Carboxy-S-adenosyl-L-methionine is bound by residues K91, W105, K110, G130, D152–S154, I181–E182, M196, Y200, and R315.

It belongs to the class I-like SAM-binding methyltransferase superfamily. CmoB family. Homotetramer.

The enzyme catalyses carboxy-S-adenosyl-L-methionine + 5-hydroxyuridine(34) in tRNA = 5-carboxymethoxyuridine(34) in tRNA + S-adenosyl-L-homocysteine + H(+). In terms of biological role, catalyzes carboxymethyl transfer from carboxy-S-adenosyl-L-methionine (Cx-SAM) to 5-hydroxyuridine (ho5U) to form 5-carboxymethoxyuridine (cmo5U) at position 34 in tRNAs. The chain is tRNA U34 carboxymethyltransferase from Shewanella frigidimarina (strain NCIMB 400).